Consider the following 239-residue polypeptide: tRNA (guanine-N(7)-)-methyltransferase (239 aa).

Residues glutamate 69, glutamate 94, aspartate 121, and aspartate 144 each coordinate S-adenosyl-L-methionine. Residue aspartate 144 is part of the active site. Substrate is bound at residue lysine 148. The interaction with RNA stretch occupies residues arginine 150 to arginine 155. Substrate is bound by residues aspartate 180 and threonine 217–glutamate 220.

The protein belongs to the class I-like SAM-binding methyltransferase superfamily. TrmB family. As to quaternary structure, monomer.

It carries out the reaction guanosine(46) in tRNA + S-adenosyl-L-methionine = N(7)-methylguanosine(46) in tRNA + S-adenosyl-L-homocysteine. It functions in the pathway tRNA modification; N(7)-methylguanine-tRNA biosynthesis. Its function is as follows. Catalyzes the formation of N(7)-methylguanine at position 46 (m7G46) in tRNA. This is tRNA (guanine-N(7)-)-methyltransferase from Photorhabdus laumondii subsp. laumondii (strain DSM 15139 / CIP 105565 / TT01) (Photorhabdus luminescens subsp. laumondii).